The primary structure comprises 295 residues: 4-hydroxy-tetrahydrodipicolinate synthase (295 aa).

T46 contacts pyruvate. Catalysis depends on Y134, which acts as the Proton donor/acceptor. Catalysis depends on K162, which acts as the Schiff-base intermediate with substrate. I205 lines the pyruvate pocket.

This sequence belongs to the DapA family. As to quaternary structure, homotetramer; dimer of dimers.

Its subcellular location is the cytoplasm. It catalyses the reaction L-aspartate 4-semialdehyde + pyruvate = (2S,4S)-4-hydroxy-2,3,4,5-tetrahydrodipicolinate + H2O + H(+). It functions in the pathway amino-acid biosynthesis; L-lysine biosynthesis via DAP pathway; (S)-tetrahydrodipicolinate from L-aspartate: step 3/4. In terms of biological role, catalyzes the condensation of (S)-aspartate-beta-semialdehyde [(S)-ASA] and pyruvate to 4-hydroxy-tetrahydrodipicolinate (HTPA). The polypeptide is 4-hydroxy-tetrahydrodipicolinate synthase (Anaeromyxobacter dehalogenans (strain 2CP-C)).